The chain runs to 316 residues: Ribose-phosphate pyrophosphokinase (316 aa).

ATP is bound by residues Asp-41–Glu-43 and Arg-100–Gln-101. Mg(2+) contacts are provided by His-134 and Asp-174. Lys-197 is a catalytic residue. Residues Arg-199, Asp-223, and Asp-227–Thr-231 contribute to the D-ribose 5-phosphate site.

This sequence belongs to the ribose-phosphate pyrophosphokinase family. Class I subfamily. Homohexamer. The cofactor is Mg(2+).

The protein localises to the cytoplasm. It carries out the reaction D-ribose 5-phosphate + ATP = 5-phospho-alpha-D-ribose 1-diphosphate + AMP + H(+). It functions in the pathway metabolic intermediate biosynthesis; 5-phospho-alpha-D-ribose 1-diphosphate biosynthesis; 5-phospho-alpha-D-ribose 1-diphosphate from D-ribose 5-phosphate (route I): step 1/1. Functionally, involved in the biosynthesis of the central metabolite phospho-alpha-D-ribosyl-1-pyrophosphate (PRPP) via the transfer of pyrophosphoryl group from ATP to 1-hydroxyl of ribose-5-phosphate (Rib-5-P). In Caldanaerobacter subterraneus subsp. tengcongensis (strain DSM 15242 / JCM 11007 / NBRC 100824 / MB4) (Thermoanaerobacter tengcongensis), this protein is Ribose-phosphate pyrophosphokinase.